Reading from the N-terminus, the 461-residue chain is ATP-dependent protease ATPase subunit HslU (461 aa).

ATP is bound by residues Ile-18, 60 to 65 (GVGKTE), Asp-274, Glu-339, and Arg-411.

This sequence belongs to the ClpX chaperone family. HslU subfamily. In terms of assembly, a double ring-shaped homohexamer of HslV is capped on each side by a ring-shaped HslU homohexamer. The assembly of the HslU/HslV complex is dependent on binding of ATP.

The protein resides in the cytoplasm. ATPase subunit of a proteasome-like degradation complex; this subunit has chaperone activity. The binding of ATP and its subsequent hydrolysis by HslU are essential for unfolding of protein substrates subsequently hydrolyzed by HslV. HslU recognizes the N-terminal part of its protein substrates and unfolds these before they are guided to HslV for hydrolysis. This is ATP-dependent protease ATPase subunit HslU from Carboxydothermus hydrogenoformans (strain ATCC BAA-161 / DSM 6008 / Z-2901).